The sequence spans 157 residues: Ribonuclease H (157 aa).

The region spanning 5 to 146 (IMKQVEIFTD…CDDLARTAAE (142 aa)) is the RNase H type-1 domain. The Mg(2+) site is built by D14, E52, D74, and D138.

Belongs to the RNase H family. As to quaternary structure, monomer. Requires Mg(2+) as cofactor.

Its subcellular location is the cytoplasm. The catalysed reaction is Endonucleolytic cleavage to 5'-phosphomonoester.. In terms of biological role, endonuclease that specifically degrades the RNA of RNA-DNA hybrids. This Aliivibrio salmonicida (strain LFI1238) (Vibrio salmonicida (strain LFI1238)) protein is Ribonuclease H.